The primary structure comprises 506 residues: ATP synthase subunit alpha (506 aa).

170–177 is a binding site for ATP; that stretch reads GDRQTGKT.

It belongs to the ATPase alpha/beta chains family. In terms of assembly, F-type ATPases have 2 components, CF(1) - the catalytic core - and CF(0) - the membrane proton channel. CF(1) has five subunits: alpha(3), beta(3), gamma(1), delta(1), epsilon(1). CF(0) has four main subunits: a(1), b(1), b'(1) and c(9-12).

The protein localises to the cellular thylakoid membrane. It catalyses the reaction ATP + H2O + 4 H(+)(in) = ADP + phosphate + 5 H(+)(out). Functionally, produces ATP from ADP in the presence of a proton gradient across the membrane. The alpha chain is a regulatory subunit. The sequence is that of ATP synthase subunit alpha from Parasynechococcus marenigrum (strain WH8102).